Reading from the N-terminus, the 392-residue chain is Phosphoglycerate kinase (392 aa).

Residues 21 to 23, Arg36, 59 to 62, Arg118, and Arg151 contribute to the substrate site; these read DFN and HLGR. Residues Lys201, Gly292, Glu323, and 349-352 each bind ATP; that span reads GGDS.

The protein belongs to the phosphoglycerate kinase family. Monomer.

It localises to the cytoplasm. It catalyses the reaction (2R)-3-phosphoglycerate + ATP = (2R)-3-phospho-glyceroyl phosphate + ADP. The protein operates within carbohydrate degradation; glycolysis; pyruvate from D-glyceraldehyde 3-phosphate: step 2/5. The chain is Phosphoglycerate kinase from Borrelia hermsii (strain HS1 / DAH).